The chain runs to 236 residues: Small ribosomal subunit protein uS3c (236 aa).

In terms of domain architecture, KH type-2 spans 47 to 127 (VRKYVRSSSR…KLNMTLSQVA (81 aa)).

It belongs to the universal ribosomal protein uS3 family. Part of the 30S ribosomal subunit.

Its subcellular location is the plastid. It is found in the chloroplast. This chain is Small ribosomal subunit protein uS3c (rps3), found in Zygnema circumcarinatum (Green alga).